We begin with the raw amino-acid sequence, 549 residues long: MAQLSGQPVVILPEGTQRYVGRDAQRLNILAARIIAETVRTTLGPKGMDKMLVDSLGDIVVTNDGATILDKIDLQHPAAKMMVEVAKTQDKEAGDGTTTAVVIAGELLRKAEELLDQNIHPSIIIKGYALAAEKAQEILEEIAIKVNPDDEETLLRIAMTSITGKNAESHKELLAKLAVDAVKQVAEKKDGKYVVDLDNIKFEKKAGEGVEESELVRGVVIDKEVVHPRMPKRVEGAKIALINEALEVKKTETDAKINITSPDQLMSFLEQEEKMLKDMVDHIAQTGANVVFVQKGIDDLAQHYLAKYGIMAVRRVKKSDMEKLAKATGAKIVTNVKDLTPEDLGYAEIVEERKLAGENMIFVEGCKNPKAVTILIRGGTEHVIDEVERALEDAVKVVKDVMEDGAVLPAGGAPEIELAISVDEYAKQVGGKEALAIENFADALKIIPKTLAENAGLDTVEILVKVISEHKNKGLGIGIDVFAGEPADMLERGIIAPLRVTKQAIKSARAAIMILRIDDVIAAKVSKPEGRQGAECPPNGCMGGMDMRM.

The tract at residues 529–549 (EGRQGAECPPNGCMGGMDMRM) is disordered.

It belongs to the TCP-1 chaperonin family. Forms a Heterooligomeric complex of two stacked eight-membered rings.

Functionally, molecular chaperone; binds unfolded polypeptides in vitro, and has a weak ATPase activity. This is Thermosome subunit alpha (thsA) from Thermococcus sp. (strain KS-8).